The primary structure comprises 82 residues: Probable tautomerase XF_1725 (82 aa).

The Proton acceptor; via imino nitrogen role is filled by Pro2.

The protein belongs to the 4-oxalocrotonate tautomerase family.

The chain is Probable tautomerase XF_1725 from Xylella fastidiosa (strain 9a5c).